The chain runs to 257 residues: Acetylglutamate kinase (257 aa).

Residues G43–G44, R65, and N157 each bind substrate.

The protein belongs to the acetylglutamate kinase family. ArgB subfamily.

It localises to the cytoplasm. The catalysed reaction is N-acetyl-L-glutamate + ATP = N-acetyl-L-glutamyl 5-phosphate + ADP. It functions in the pathway amino-acid biosynthesis; L-arginine biosynthesis; N(2)-acetyl-L-ornithine from L-glutamate: step 2/4. In terms of biological role, catalyzes the ATP-dependent phosphorylation of N-acetyl-L-glutamate. This Pasteurella multocida (strain Pm70) protein is Acetylglutamate kinase.